A 96-amino-acid polypeptide reads, in one-letter code: Large ribosomal subunit protein uL23 (96 aa).

Belongs to the universal ribosomal protein uL23 family. In terms of assembly, part of the 50S ribosomal subunit. Contacts protein L29, and trigger factor when it is bound to the ribosome.

In terms of biological role, one of the early assembly proteins it binds 23S rRNA. One of the proteins that surrounds the polypeptide exit tunnel on the outside of the ribosome. Forms the main docking site for trigger factor binding to the ribosome. In Clostridium novyi (strain NT), this protein is Large ribosomal subunit protein uL23.